The following is a 192-amino-acid chain: Erythropoietin (192 aa).

An N-terminal signal peptide occupies residues 1-26 (MGVPERPTLLLLLSLLLIPLGLPVLC). Cys-33 and Cys-187 form a disulfide bridge. N-linked (GlcNAc...) asparagine glycans are attached at residues Asn-50, Asn-64, and Asn-109.

Belongs to the EPO/TPO family. As to expression, produced by kidney or liver of adult mammals and by liver of fetal or neonatal mammals.

Its subcellular location is the secreted. Hormone involved in the regulation of erythrocyte proliferation and differentiation and the maintenance of a physiological level of circulating erythrocyte mass. Binds to EPOR leading to EPOR dimerization and JAK2 activation thereby activating specific downstream effectors, including STAT1 and STAT3. In Rattus norvegicus (Rat), this protein is Erythropoietin (Epo).